Reading from the N-terminus, the 136-residue chain is Large ribosomal subunit protein uL16 (136 aa).

This sequence belongs to the universal ribosomal protein uL16 family. In terms of assembly, part of the 50S ribosomal subunit.

In terms of biological role, binds 23S rRNA and is also seen to make contacts with the A and possibly P site tRNAs. The polypeptide is Large ribosomal subunit protein uL16 (Aliivibrio fischeri (strain ATCC 700601 / ES114) (Vibrio fischeri)).